Reading from the N-terminus, the 333-residue chain is uncharacterized protein (333 aa).

This is an uncharacterized protein from Gallus gallus (Chicken).